Consider the following 171-residue polypeptide: 3-hydroxydecanoyl-[acyl-carrier-protein] dehydratase (171 aa).

His-70 is an active-site residue.

Belongs to the thioester dehydratase family. FabA subfamily. As to quaternary structure, homodimer.

The protein resides in the cytoplasm. It carries out the reaction a (3R)-hydroxyacyl-[ACP] = a (2E)-enoyl-[ACP] + H2O. It catalyses the reaction (3R)-hydroxydecanoyl-[ACP] = (2E)-decenoyl-[ACP] + H2O. The catalysed reaction is (2E)-decenoyl-[ACP] = (3Z)-decenoyl-[ACP]. The protein operates within lipid metabolism; fatty acid biosynthesis. In terms of biological role, necessary for the introduction of cis unsaturation into fatty acids. Catalyzes the dehydration of (3R)-3-hydroxydecanoyl-ACP to E-(2)-decenoyl-ACP and then its isomerization to Z-(3)-decenoyl-ACP. Can catalyze the dehydratase reaction for beta-hydroxyacyl-ACPs with saturated chain lengths up to 16:0, being most active on intermediate chain length. The sequence is that of 3-hydroxydecanoyl-[acyl-carrier-protein] dehydratase from Xanthomonas euvesicatoria pv. vesicatoria (strain 85-10) (Xanthomonas campestris pv. vesicatoria).